The sequence spans 456 residues: MFLLLPFDSLIVNLLGISLTVLFTLLLVFIIVPAIFGVSFGIRKLYMKTLLKIFAWATLRMERGAKERNHQLYKPYTNGIIAKDPTSLEEEIKEIRRSGSSKALDKTPEFELSDIFYFCRKGMETIMDDEVTKRFSAEELESWNLLSRTNYNFQYISLRLTILWGLGVLIRYCFLLPLRIALAFTGIGLLVVGTTMVGYLPNGRFKEFLSKHVHLMCYRICVRALTAIITYHNRKNRPRNGGICVANHTSPIDVIILASDGYYAMVGQVHGGLMGVIQRAMVKACPHVWFERSEVKDRHLVAKRLTEHVQDKSKLPILIFPEGTCINNTSVMMFKKGSFEIGATVYPVAIKYDPQFGDAFWNSSKYGMVTYLLRMMTSWAIVCSVWYLPPMTREKDEDAVQFANRVKSAIARQGGLVDLLWDGGLKREKVKDTFKEEQQKLYSKMIVGNHEDRSRS.

The signal sequence occupies residues 1 to 37; that stretch reads MFLLLPFDSLIVNLLGISLTVLFTLLLVFIIVPAIFG. 2 helical membrane passes run 156 to 176 and 180 to 200; these read ISLRLTILWGLGVLIRYCFLL and IALAFTGIGLLVVGTTMVGYL. N-linked (GlcNAc...) asparagine glycosylation is present at Asn247. An HXXXXD motif motif is present at residues 248–253; the sequence is HTSPID. Asn327, Asn328, and Asn362 each carry an N-linked (GlcNAc...) asparagine glycan.

It belongs to the 1-acyl-sn-glycerol-3-phosphate acyltransferase family. Highly expressed in testis.

The protein localises to the endoplasmic reticulum membrane. The catalysed reaction is sn-glycerol 3-phosphate + an acyl-CoA = a 1-acyl-sn-glycero-3-phosphate + CoA. It catalyses the reaction dodecanoyl-CoA + sn-glycerol 3-phosphate = 1-dodecanoyl-sn-glycerol 3-phosphate + CoA. The enzyme catalyses sn-glycerol 3-phosphate + hexadecanoyl-CoA = 1-hexadecanoyl-sn-glycero-3-phosphate + CoA. It carries out the reaction sn-glycerol 3-phosphate + octadecanoyl-CoA = 1-octadecanoyl-sn-glycero-3-phosphate + CoA. The catalysed reaction is sn-glycerol 3-phosphate + (9Z)-octadecenoyl-CoA = 1-(9Z-octadecenoyl)-sn-glycero-3-phosphate + CoA. It catalyses the reaction (9Z,12Z)-octadecadienoyl-CoA + sn-glycerol 3-phosphate = 1-(9Z,12Z)-octadecadienoyl-sn-glycero-3-phosphate + CoA. It participates in phospholipid metabolism; CDP-diacylglycerol biosynthesis; CDP-diacylglycerol from sn-glycerol 3-phosphate: step 1/3. Its function is as follows. Converts glycerol-3-phosphate to 1-acyl-sn-glycerol-3-phosphate (lysophosphatidic acid or LPA) by incorporating an acyl moiety at the sn-1 position of the glycerol backbone. Active against both saturated and unsaturated long-chain fatty acyl-CoAs. Protects cells against lipotoxicity. This chain is Glycerol-3-phosphate acyltransferase 4, found in Mus musculus (Mouse).